Reading from the N-terminus, the 574-residue chain is Putative ABC transporter ATP-binding protein VV2_1533 (574 aa).

2 ABC transporter domains span residues 3 to 244 (IEFS…GIRE) and 299 to 533 (LDVR…ANLT). ATP-binding positions include 37 to 44 (GPSGSGKS) and 332 to 339 (GKNGSGKS).

This sequence belongs to the ABC transporter superfamily.

The protein resides in the cell inner membrane. Its function is as follows. Probably part of an ABC transporter complex. Responsible for energy coupling to the transport system. The protein is Putative ABC transporter ATP-binding protein VV2_1533 of Vibrio vulnificus (strain CMCP6).